Consider the following 30-residue polypeptide: Beta/omega-theraphotoxin-Tp2a (30 aa).

Intrachain disulfides connect Cys-2–Cys-16, Cys-9–Cys-21, and Cys-15–Cys-25. The segment at Lys-26–Trp-30 is flexible tail region important for ability to inhibit Nav channel. Positions Leu-29–Trp-30 are hydrophobic dyad that anchors the toxin into the membrane while positioning it over the S3 helix of Nav1.7/SCN9A.

It belongs to the neurotoxin 30 (phrixotoxin) family. Expressed by the venom gland.

The protein localises to the secreted. Functionally, gating-modifier toxin that targets voltage-gated sodium channels with a selective activity on Nav1.7/SCN9A (IC(50)=1-1.5 nM). It inhibits both activation and inactivation. For inhibition of activation, it is 100-fold more selective for Nav1.7/SCN9A (IC(50)=0.26-3) than for other sodium channels (Nav1.2/SCN2A (IC(50)=40-540 nM), Nav1.3/SCN3A (IC(50)=102 nM), Nav1.4/SCN4A (IC(50)=30-39 nM), Nav1.5/SCN5A (IC(50)=19-90 nM), Nav1.6/SCN8A (IC(50)=26 nM), and Nav1.8/SCN10A (IC(50)=146 nM)). For inhibition of inactivation, it is 20-fold more potent in inhibiting inactivation on Nav1.7/SCN9A (IC(50)=250 nM) than other channels (about 4.6 uM for all channels). It also weakly inhibits Cav1.2/CACNA1C and Cav3.2/CACNA1H (29% block at 1 uM). It inhibits Nav1.7/SCN9A activation by interacting with DII and impairs Nav1.7/SCN9A inactivation by interacting with DIV. It docks on top of the DII S3 helix Nav1.7/SCN9A. It is about 60-fold less active on Nav1.7/SCN9A at depolarized potential (0 mV; IC(50)=15 nM), compared to -120 mV potential (IC(50)=0.26 nM). This toxin binds to lipid membrane. This ability correlates with hNav1.7/SCN9A inhibition, showing that membrane binding is the first step in the inhibitory mechanism of this toxin. It inhibits Nav1.2/SCN2A less potently when it is coexpressed with SCN2B or SCN4B than when it is expressed alone, showing that beta subunits (SCN2B and SCN4B) have a protective effect. The protein is Beta/omega-theraphotoxin-Tp2a of Thrixopelma pruriens (Peruvian green velvet tarantula).